We begin with the raw amino-acid sequence, 330 residues long: Glucokinase (330 aa).

Belongs to the ROK (NagC/XylR) family.

It localises to the cytoplasm. The enzyme catalyses D-glucose + ATP = D-glucose 6-phosphate + ADP + H(+). The polypeptide is Glucokinase (glcK) (Halalkalibacterium halodurans (strain ATCC BAA-125 / DSM 18197 / FERM 7344 / JCM 9153 / C-125) (Bacillus halodurans)).